A 637-amino-acid chain; its full sequence is 1-deoxy-D-xylulose-5-phosphate synthase (637 aa).

Thiamine diphosphate contacts are provided by residues H76 and 117 to 119 (GHS). D148 provides a ligand contact to Mg(2+). Residues 149 to 150 (GA), N177, Y294, and E381 each bind thiamine diphosphate. N177 lines the Mg(2+) pocket.

It belongs to the transketolase family. DXPS subfamily. Homodimer. The cofactor is Mg(2+). It depends on thiamine diphosphate as a cofactor.

The catalysed reaction is D-glyceraldehyde 3-phosphate + pyruvate + H(+) = 1-deoxy-D-xylulose 5-phosphate + CO2. The protein operates within metabolic intermediate biosynthesis; 1-deoxy-D-xylulose 5-phosphate biosynthesis; 1-deoxy-D-xylulose 5-phosphate from D-glyceraldehyde 3-phosphate and pyruvate: step 1/1. Functionally, catalyzes the acyloin condensation reaction between C atoms 2 and 3 of pyruvate and glyceraldehyde 3-phosphate to yield 1-deoxy-D-xylulose-5-phosphate (DXP). This Neisseria meningitidis serogroup A / serotype 4A (strain DSM 15465 / Z2491) protein is 1-deoxy-D-xylulose-5-phosphate synthase.